Here is a 115-residue protein sequence, read N- to C-terminus: Replication initiation control protein YabA (115 aa).

4 residues coordinate Zn(2+): histidine 90, cysteine 92, cysteine 106, and cysteine 109.

It belongs to the YabA family. In terms of assembly, homotetramer. Interacts with both DnaA and DnaN, acting as a bridge between these two proteins. Zn(2+) serves as cofactor.

The protein localises to the cytoplasm. The protein resides in the nucleoid. Its function is as follows. Involved in control of chromosome replication initiation. Inhibits the cooperative binding of DnaA to the oriC region, thus negatively regulating initiation of chromosome replication. Inhibits the ability of DnaA-ATP to form a helix on DNA; does not disassemble preformed DnaA-DNA helices. Decreases the residence time of DnaA on the chromosome at its binding sites (oriC, replication forks and promoter-binding sites). Tethers DnaA to the replication machinery via the DNA polymerase beta sliding clamp subunit (dnaN). Associates with oriC and other DnaA targets on the chromosome in a DnaA-dependent manner. The polypeptide is Replication initiation control protein YabA (Staphylococcus aureus (strain bovine RF122 / ET3-1)).